A 135-amino-acid polypeptide reads, in one-letter code: U-myrmeciitoxin(01)-Mg7a (135 aa).

A signal peptide spans 1–21; that stretch reads MKLSCLSLALAIILLLAIVHS. The propeptide occupies 22-72; sequence PNMEVKALAGPEADAIGFADAFGEADAFGEADAFGEADAFGEADAFGEADA. Residues 69-95 are disordered; the sequence is EADAKRSKSSSKTKPKKPKKPKKKIKI. The segment covering 75–93 has biased composition (basic residues); that stretch reads SKSSSKTKPKKPKKPKKKI. Ser-120 carries O-linked (GalNAc...) serine glycosylation. O-linked (GalNAc...) threonine glycans are attached at residues Thr-129 and Thr-130.

This sequence belongs to the formicidae venom precursor-01 superfamily. Post-translationally, glycosylation is critical to maintaining the aqueous solubility of this protein, but does not directly contribute to its activity. Expressed by the venom gland.

It localises to the secreted. Its subcellular location is the target cell membrane. Functionally, neurotoxin that triggers pain behavior and inflammation in mammals, and is paralytic and lethal to insects. Causes a time-dependent increase in cell leak current. May act by targeting membranes. This is U-myrmeciitoxin(01)-Mg7a from Myrmecia gulosa (Red bulldog ant).